Here is a 39-residue protein sequence, read N- to C-terminus: GWLKKIGKKIGRVGQHTRDATIQGLAVAQQAANVAATAR.

It is found in the secreted. In terms of biological role, antibacterial peptide active against Gram-negative bacterium E.coli. Has no activity against Gram-positive bacterium M.luteus. Weakly active against M.luteus. In Calliphora vicina (Blue blowfly), this protein is Cecropin.